The sequence spans 21 residues: 23S rRNA methylase leader peptide (21 aa).

Involved in erythromycin resistance. This Corynebacterium diphtheriae protein is 23S rRNA methylase leader peptide.